Consider the following 277-residue polypeptide: Large ribosomal subunit protein uL2 (277 aa).

2 disordered regions span residues 34–55 and 213–277; these read LQPLPKKAGRNNQGKLTVRHHG and WKGI…RKKK.

This sequence belongs to the universal ribosomal protein uL2 family. As to quaternary structure, part of the 50S ribosomal subunit. Forms a bridge to the 30S subunit in the 70S ribosome.

Its function is as follows. One of the primary rRNA binding proteins. Required for association of the 30S and 50S subunits to form the 70S ribosome, for tRNA binding and peptide bond formation. It has been suggested to have peptidyltransferase activity; this is somewhat controversial. Makes several contacts with the 16S rRNA in the 70S ribosome. This Staphylococcus haemolyticus (strain JCSC1435) protein is Large ribosomal subunit protein uL2.